The primary structure comprises 303 residues: Quinolinate synthase (303 aa).

2 residues coordinate iminosuccinate: His-25 and Ser-42. [4Fe-4S] cluster is bound at residue Cys-87. Residues 113 to 115 and Ser-130 contribute to the iminosuccinate site; that span reads YVN. Cys-173 contacts [4Fe-4S] cluster. Residues 199-201 and Thr-216 contribute to the iminosuccinate site; that span reads HPE. [4Fe-4S] cluster is bound at residue Cys-261.

The protein belongs to the quinolinate synthase family. Type 2 subfamily. [4Fe-4S] cluster is required as a cofactor.

Its subcellular location is the cytoplasm. The catalysed reaction is iminosuccinate + dihydroxyacetone phosphate = quinolinate + phosphate + 2 H2O + H(+). The protein operates within cofactor biosynthesis; NAD(+) biosynthesis; quinolinate from iminoaspartate: step 1/1. Functionally, catalyzes the condensation of iminoaspartate with dihydroxyacetone phosphate to form quinolinate. In Desulforudis audaxviator (strain MP104C), this protein is Quinolinate synthase.